A 261-amino-acid polypeptide reads, in one-letter code: Small ribosomal subunit protein uS2 (261 aa).

The protein belongs to the universal ribosomal protein uS2 family.

The polypeptide is Small ribosomal subunit protein uS2 (Enterococcus faecalis (strain ATCC 700802 / V583)).